We begin with the raw amino-acid sequence, 285 residues long: MKLCGFDIGLDQPFFLIAGPCVVESEQLQMDTAGTLKEITASLGIPFIFKSSYDKANRSSGTSFRGPGMEKGLQILAKVKRELGLPILTDVHSEAEITAVAAVVDVLQTPAFLCRQTDFIHAVAQSGRPVNIKKGQFLAPGDMKNVIDKARAAAREKGLDEDRFMACERGASFGYNNLVSDMRSLAIMRETRAPVVFDATHSVQLPGGMGTSSGGQREMVPVLARAAVAVGIAGLFMETHPDPANAMSDGPNAVPLKHMKALLETLLELDRVTKKNGYLENSFSA.

The protein belongs to the KdsA family.

It localises to the cytoplasm. The catalysed reaction is D-arabinose 5-phosphate + phosphoenolpyruvate + H2O = 3-deoxy-alpha-D-manno-2-octulosonate-8-phosphate + phosphate. The protein operates within carbohydrate biosynthesis; 3-deoxy-D-manno-octulosonate biosynthesis; 3-deoxy-D-manno-octulosonate from D-ribulose 5-phosphate: step 2/3. It participates in bacterial outer membrane biogenesis; lipopolysaccharide biosynthesis. This Polaromonas naphthalenivorans (strain CJ2) protein is 2-dehydro-3-deoxyphosphooctonate aldolase.